Reading from the N-terminus, the 185-residue chain is MIIIVTGMPGSGKSKIVKEFEKRGVPSVSMGDVVREETAKRGLELTKENVAKVSIRLRQELGQNAVAKLAVEKVRELLRKNKVVVIDGVRSLDEVGTFRSAFPGEEIIIVAVHTPPHMRFERLKARGRHDDPQSWEDFEERDWKELKFGIGNVIAMADYMIVNDCPKEEYERRVQELVEKILAEH.

Residue 7 to 14 (GMPGSGKS) participates in ATP binding.

It belongs to the UPF0200 family.

This is UPF0200 protein TON_1344 from Thermococcus onnurineus (strain NA1).